A 319-amino-acid polypeptide reads, in one-letter code: Ciliary microtubule inner protein 2A (319 aa).

The protein belongs to the CIMIP2 family. Microtubule inner protein component of sperm flagellar doublet microtubules.

The protein localises to the cytoplasm. It is found in the cytoskeleton. Its subcellular location is the flagellum axoneme. Its function is as follows. Microtubule inner protein (MIP) part of the dynein-decorated doublet microtubules (DMTs) in flagellum axoneme. Binds to the intra-tubulin interfaces. The sequence is that of Ciliary microtubule inner protein 2A (Cimip2a) from Mus musculus (Mouse).